A 452-amino-acid chain; its full sequence is Septin-10 (452 aa).

The region spanning 36-302 (QGFCFNILCV…ELYRRCKLQE (267 aa)) is the Septin-type G domain. The segment at 46-53 (GETGIGKS) is G1 motif. GTP is bound by residues 46–53 (GETGIGKS), glycine 101, 182–190 (KADTISKSE), glycine 236, and arginine 251. A G3 motif region spans residues 98–101 (NTVG). Positions 181–184 (AKAD) are G4 motif. Serine 414 is modified (phosphoserine).

This sequence belongs to the TRAFAC class TrmE-Era-EngA-EngB-Septin-like GTPase superfamily. Septin GTPase family. In terms of assembly, septins polymerize into heterooligomeric protein complexes that form filaments, and can associate with cellular membranes, actin filaments and microtubules. GTPase activity is required for filament formation. Interacts with ADGB. Proteolytically cleaved in vitro in a calmodulin-dependent manner.

Its subcellular location is the cytoplasm. The protein localises to the cytoskeleton. It is found in the cell projection. It localises to the cilium. The protein resides in the flagellum. Filament-forming cytoskeletal GTPase. May play a role in cytokinesis (Potential). The protein is Septin-10 of Mus musculus (Mouse).